A 220-amino-acid chain; its full sequence is Probable GTP-binding protein EngB (220 aa).

The region spanning Pro24 to Pro207 is the EngB-type G domain. GTP-binding positions include Gly32–Ser39, Gly59–His63, Asp81–Gly84, Thr148–Asp151, and Leu185–Ala188. Mg(2+) is bound by residues Ser39 and Thr61.

The protein belongs to the TRAFAC class TrmE-Era-EngA-EngB-Septin-like GTPase superfamily. EngB GTPase family. Requires Mg(2+) as cofactor.

In terms of biological role, necessary for normal cell division and for the maintenance of normal septation. In Paraburkholderia phymatum (strain DSM 17167 / CIP 108236 / LMG 21445 / STM815) (Burkholderia phymatum), this protein is Probable GTP-binding protein EngB.